The sequence spans 254 residues: 5'-nucleotidase SurE (254 aa).

A divalent metal cation contacts are provided by D8, D9, S38, and N91.

This sequence belongs to the SurE nucleotidase family. A divalent metal cation is required as a cofactor.

It is found in the cytoplasm. It catalyses the reaction a ribonucleoside 5'-phosphate + H2O = a ribonucleoside + phosphate. Its function is as follows. Nucleotidase that shows phosphatase activity on nucleoside 5'-monophosphates. The polypeptide is 5'-nucleotidase SurE (Anaeromyxobacter dehalogenans (strain 2CP-C)).